Reading from the N-terminus, the 465-residue chain is MTIHIYNTLTRQKEEFIPLEENKVKMYVCGPTVYNYIHIGNARPPMVFDTVRRYLEYKGYDVQYVSNFTDVDDKLIKAANELGEDVPTIADRFVEAYFEDVTALGCKHATVHPRVTENMDIIIEFIQELVNKGYAYESEGDVYFRTKEFEGYGKLSHQPIADLRHGARIEVGEKKQDPLDFALWKAAKEGEIFWESPWGQGRPGWHIECSAMARKYLGDTIDIHAGGQDLAFPHHENEIAQSEALTGKTFARYWMHNGYININNEKMSKSLGNFILVHDIIKQYDPQLIRFFMLSVHYRHPINFSEELLQSTNNGLERIKTAYGNLKHRMESSTDLTDHNEKWLADLEKFQTAFEEAMNDDFNTANAITELYNVANHANQYLLEEHTSTVVIQAYVKQLETLFDILGLELAQEELLDEEIEALIQKRIEARKNRDFALSDQIRDDLKDRNIILEDTAQGTRWKRG.

C29 provides a ligand contact to Zn(2+). The short motif at P31–N41 is the 'HIGH' region element. Zn(2+) contacts are provided by C209, H234, and E238. The 'KMSKS' region signature appears at K266–S270. Position 269 (K269) interacts with ATP. S270 bears the Phosphoserine mark.

The protein belongs to the class-I aminoacyl-tRNA synthetase family. In terms of assembly, monomer. The cofactor is Zn(2+).

The protein localises to the cytoplasm. The enzyme catalyses tRNA(Cys) + L-cysteine + ATP = L-cysteinyl-tRNA(Cys) + AMP + diphosphate. This is Cysteine--tRNA ligase from Bacillus cereus (strain ATCC 10987 / NRS 248).